Reading from the N-terminus, the 97-residue chain is Transcription and mRNA export factor SUS1 (97 aa).

It belongs to the ENY2 family. Component of the nuclear pore complex (NPC)-associated TREX-2 complex (transcription and export complex 2), composed of at least SUS1, SAC3, THP1, SEM1, and CDC31. TREX-2 contains 2 SUS1 chains. The TREX-2 complex interacts with the nucleoporin NUP1. Component of the 1.8 MDa SAGA transcription coactivator-HAT complex. SAGA is built of 5 distinct domains with specialized functions. Within the SAGA complex, SUS1, SGF11, SGF73 and UBP8 form an additional subcomplex of SAGA called the DUB module (deubiquitination module). Interacts directly with THP1, SAC3, SGF11, and with the RNA polymerase II.

The protein localises to the nucleus. It localises to the nucleoplasm. The protein resides in the cytoplasm. It is found in the P-body. In terms of biological role, involved in mRNA export coupled transcription activation by association with both the TREX-2 and the SAGA complexes. At the promoters, SAGA is required for recruitment of the basal transcription machinery. It influences RNA polymerase II transcriptional activity through different activities such as TBP interaction and promoter selectivity, interaction with transcription activators, and chromatin modification through histone acetylation and deubiquitination. Within the SAGA complex, participates in a subcomplex required for deubiquitination of H2B and for the maintenance of steady-state H3 methylation levels. The TREX-2 complex functions in docking export-competent ribonucleoprotein particles (mRNPs) to the nuclear entrance of the nuclear pore complex (nuclear basket). TREX-2 participates in mRNA export and accurate chromatin positioning in the nucleus by tethering genes to the nuclear periphery. May also be involved in cytoplasmic mRNA decay by interaction with components of P-bodies. In Meyerozyma guilliermondii (strain ATCC 6260 / CBS 566 / DSM 6381 / JCM 1539 / NBRC 10279 / NRRL Y-324) (Yeast), this protein is Transcription and mRNA export factor SUS1.